Consider the following 1383-residue polypeptide: DNA-directed RNA polymerase subunit beta (1383 aa).

This sequence belongs to the RNA polymerase beta chain family. As to quaternary structure, the RNAP catalytic core consists of 2 alpha, 1 beta, 1 beta' and 1 omega subunit. When a sigma factor is associated with the core the holoenzyme is formed, which can initiate transcription.

The catalysed reaction is RNA(n) + a ribonucleoside 5'-triphosphate = RNA(n+1) + diphosphate. In terms of biological role, DNA-dependent RNA polymerase catalyzes the transcription of DNA into RNA using the four ribonucleoside triphosphates as substrates. The polypeptide is DNA-directed RNA polymerase subunit beta (Anaplasma phagocytophilum (strain HZ)).